A 339-amino-acid chain; its full sequence is Type IV secretion system protein PtlH homolog (339 aa).

This sequence belongs to the GSP E family.

The chain is Type IV secretion system protein PtlH homolog (ptlH) from Bordetella parapertussis (strain 12822 / ATCC BAA-587 / NCTC 13253).